Consider the following 90-residue polypeptide: Kunitz-type serine protease inhibitor bitisilin-2 (90 aa).

A signal peptide spans 1-24; sequence MSSGGLLLLLGLLTLWAELTPVSG. Positions 31-81 constitute a BPTI/Kunitz inhibitor domain; it reads CYLPADTGPCMANFPRFYYDSASKKCKKFTYGGCHGNANNFETREECRKKC. 3 cysteine pairs are disulfide-bonded: Cys-31–Cys-81, Cys-40–Cys-64, and Cys-56–Cys-77.

Belongs to the venom Kunitz-type family. Expressed by the venom gland.

It localises to the secreted. Serine protease inhibitor. The chain is Kunitz-type serine protease inhibitor bitisilin-2 from Bitis gabonica (Gaboon adder).